The chain runs to 898 residues: Transportin-1 (898 aa).

HEAT repeat units lie at residues 19 to 46 (GLQQ…QKLE), 51 to 89 (YPDF…AHFQ), 98 to 131 (FIKS…KGEL), 137 to 174 (LLPK…LDSD), 181 to 211 (NIMI…QFII), 224 to 251 (FIEN…VMLL), 263 to 290 (HNIV…FWLT), 306 to 397 (PKLI…LANV), 405 to 433 (HILP…GAIA), 445 to 472 (PELI…TLSR), 486 to 519 (LKPL…EEEA), 527 to 560 (LAYI…ADSV), 568 to 606 (EYIQ…TALQ), 614 to 665 (EPVY…GLGG), 676 to 707 (ILTL…KACF), 715 to 748 (ADFM…IQMG), 756 to 791 (PMVL…YVCP), 799 to 832 (QQFI…ISVN), 841 to 872 (IFFC…KNQV), and 875 to 895 (ENWR…LAAF). An Importin N-terminal domain is found at 41–109 (VQQKLEQLNQ…KSECLNNIGD (69 aa)). The segment at 347–374 (FHRSRTVAQQHEEDGIEEEDDDDDEIDD) is disordered. Acidic residues predominate over residues 360 to 374 (DGIEEEDDDDDEIDD).

Belongs to the importin beta family. Importin beta-2 subfamily. As to quaternary structure, identified in a complex that contains TNPO1, RAN and RANBP1. Binds HNRPA1, HNRPA2, HNRNPDL, RPS7, RPL5 and RAN. Interacts with H2A, H2B, H3 and H4 histones. Interacts with isoform 1 and isoform 5 of ADAR/ADAR1 (via DRBM 3 domain). Interacts with SNAI1 (via zinc fingers); the interaction mediates SNAI1 nuclear import. Interacts with SNAI2 (via zinc fingers). Interacts with RPL23A (via BIB domain) and SRP19; this interaction is involved in RPL23A and SRP19 import into the nucleus. Interacts (via HEAT repeats 8-12) with BAP1 (via non-classical PY-NLS); this interaction is direct, is involved in BAP1 nuclear import and disrupts BAP1 homodimerization.

The protein localises to the cytoplasm. It is found in the nucleus. Functionally, functions in nuclear protein import as nuclear transport receptor. Serves as receptor for nuclear localization signals (NLS) in cargo substrates. May mediate docking of the importin/substrate complex to the nuclear pore complex (NPC) through binding to nucleoporin and the complex is subsequently translocated through the pore by an energy requiring, Ran-dependent mechanism. At the nucleoplasmic side of the NPC, Ran binds to the importin, the importin/substrate complex dissociates and importin is re-exported from the nucleus to the cytoplasm where GTP hydrolysis releases Ran. The directionality of nuclear import is thought to be conferred by an asymmetric distribution of the GTP- and GDP-bound forms of Ran between the cytoplasm and nucleus. Involved in nuclear import of M9-containing proteins. In vitro, binds directly to the M9 region of the heterogeneous nuclear ribonucleoproteins (hnRNP), A1 and A2 and mediates their nuclear import. Involved in hnRNP A1/A2 nuclear export. Mediates the nuclear import of ribosomal proteins RPL23A, RPS7 and RPL5. In vitro, mediates nuclear import of SRP19. Mediates the import of histones H2A, H2B, H3 and H4. Mediates nuclear import of ADAR/ADAR1 in a RanGTP-dependent manner. Main mediator of PR-DUB complex component BAP1 nuclear import; acts redundantly with the karyopherins KPNA1 and KPNA2. In Mus musculus (Mouse), this protein is Transportin-1 (Tnpo1).